The following is a 479-amino-acid chain: Protein kinase 2 (479 aa).

The disordered stretch occupies residues 1–136 (MGKGQSKIKN…NGNDDEDEGP (136 aa)). Low complexity-rich tracts occupy residues 52-65 (AQQQQQQQQTTTAA) and 79-96 (IPAPATQTPITQTGTPTI). The segment covering 102-115 (NTDNNNINGASNEA) has biased composition (polar residues). Residues 153 to 407 (FELLNVIGKG…GGEVKQHPWF (255 aa)) enclose the Protein kinase domain. Residues 159–167 (IGKGSFGKV) and Lys-182 contribute to the ATP site. Residue Asp-276 is the Proton acceptor of the active site. Thr-309 carries the phosphothreonine; by autocatalysis modification. Residues 408-479 (KNIDWEKLDR…TYVADSILKD (72 aa)) enclose the AGC-kinase C-terminal domain. A Phosphothreonine modification is found at Thr-470.

Belongs to the protein kinase superfamily. AGC Ser/Thr protein kinase family. S6 kinase subfamily. Post-translationally, seems to be myristoylated.

It localises to the cytoplasm. Its subcellular location is the cell membrane. It carries out the reaction L-seryl-[protein] + ATP = O-phospho-L-seryl-[protein] + ADP + H(+). It catalyses the reaction L-threonyl-[protein] + ATP = O-phospho-L-threonyl-[protein] + ADP + H(+). Required for morphogenesis during multicellular development. Phosphorylates talB, gefN, gefS, PI4P 5-kinase and gacQ. This is Protein kinase 2 (pkgB) from Dictyostelium discoideum (Social amoeba).